We begin with the raw amino-acid sequence, 132 residues long: Peptide methionine sulfoxide reductase MsrB (132 aa).

Residues 9 to 131 enclose the MsrB domain; sequence DAQWRAELSP…NSASLSFHPK (123 aa). Residues C48, C51, C97, and C100 each contribute to the Zn(2+) site. The active-site Nucleophile is the C120.

This sequence belongs to the MsrB Met sulfoxide reductase family. Zn(2+) serves as cofactor.

The catalysed reaction is L-methionyl-[protein] + [thioredoxin]-disulfide + H2O = L-methionyl-(R)-S-oxide-[protein] + [thioredoxin]-dithiol. In Thiobacillus denitrificans (strain ATCC 25259 / T1), this protein is Peptide methionine sulfoxide reductase MsrB.